Reading from the N-terminus, the 1199-residue chain is Chromosome partition protein Smc (1199 aa).

32-39 (PNGSGKSN) is an ATP binding site. Residues 192–528 (GVAEFDEKSE…NARIKTLKDM (337 aa)) are a coiled coil. The region spanning 546-658 (PGVVDIAGNL…VDNLENAKKL (113 aa)) is the SMC hinge domain. Residues 691-1051 (IKVDIDMKKL…YLQLISEVQK (361 aa)) are a coiled coil.

The protein belongs to the SMC family. Homodimer.

The protein resides in the cytoplasm. Required for chromosome condensation and partitioning. The chain is Chromosome partition protein Smc from Methanococcus voltae.